The primary structure comprises 365 residues: Flagellar P-ring protein (365 aa).

A signal peptide spans 1-19 (MIKFLSALILLLVTTAAQA).

It belongs to the FlgI family. As to quaternary structure, the basal body constitutes a major portion of the flagellar organelle and consists of four rings (L,P,S, and M) mounted on a central rod.

The protein resides in the periplasm. The protein localises to the bacterial flagellum basal body. Its function is as follows. Assembles around the rod to form the L-ring and probably protects the motor/basal body from shearing forces during rotation. The polypeptide is Flagellar P-ring protein (Shigella flexneri serotype 5b (strain 8401)).